A 196-amino-acid polypeptide reads, in one-letter code: MNAMEFFQRSAGKWRSQRTTHHLAFRQAEIGHSDIEVINLDAKDPKILEICKMHEIDPSLAAGGAFVTWDGSMAWDKDDENHKGSTVFAIVPDSENPRSGRMLRERGYAEIIPVVGRFEMDDEDGLNLITEYETMSSIERFWFTSPNLRMRSSAVKRFGGFNTSTFCTEVRLVESNSDSQTETPHVDLEYYSAFGW.

The protein belongs to the CpcS/CpeS biliprotein lyase family.

Its function is as follows. Covalently attaches a chromophore to Cys residue(s) of phycobiliproteins. In Trichodesmium erythraeum (strain IMS101), this protein is Chromophore lyase CpcS/CpeS 2.